The sequence spans 354 residues: N-acylethanolamine-hydrolyzing acid amidase (354 aa).

Positions 1–22 (MRSPGIVLLLLLLLLLPPGAAP) are cleaved as a signal peptide. N35 and N104 each carry an N-linked (GlcNAc...) asparagine glycan. C123 (nucleophile) is an active-site residue. N306, N312, and N352 each carry an N-linked (GlcNAc...) asparagine glycan.

It belongs to the acid ceramidase family. Heterodimer of an alpha and a beta subunit, produced by autocatalytic cleavage. Post-translationally, N-glycosylated. Tunicamycin treatment causes a reduction in specific activity against N-palmitoylethanolamine. Autoproteolytic cleavage at pH 4.5 gives rise to the alpha and beta subunit. Cleavage gives rise to a conformation change that activates the enzyme. The same catalytic Cys residue mediates the autoproteolytic cleavage and subsequent hydrolysis of lipid substrates.

The protein localises to the lysosome. The protein resides in the membrane. It catalyses the reaction N-hexadecanoylethanolamine + H2O = ethanolamine + hexadecanoate. The enzyme catalyses an N-(long-chain fatty acyl)ethanolamine + H2O = a long-chain fatty acid + ethanolamine. It carries out the reaction N-dodecanoylethanolamine + H2O = dodecanoate + ethanolamine. The catalysed reaction is N-tetradecanoylethanolamine + H2O = tetradecanoate + ethanolamine. It catalyses the reaction an N-acylsphing-4-enine + H2O = sphing-4-enine + a fatty acid. The enzyme catalyses N-hexadecanoylsphing-4-enine + H2O = sphing-4-enine + hexadecanoate. It carries out the reaction N-dodecanoylsphing-4-enine + H2O = dodecanoate + sphing-4-enine. It participates in lipid metabolism; fatty acid metabolism. Functionally, degrades bioactive fatty acid amides to their corresponding acids, with the following preference: N-palmitoylethanolamine &gt; N-myristoylethanolamine &gt; N-stearoylethanolamine &gt; N-oleoylethanolamine &gt; N-linoleoylethanolamine &gt; N-arachidonoylethanolamine. The protein is N-acylethanolamine-hydrolyzing acid amidase of Cavia porcellus (Guinea pig).